A 326-amino-acid chain; its full sequence is 3-dehydrosphinganine reductase TSC10A (326 aa).

The Lumenal portion of the chain corresponds to 1-7 (MAAISPL). Residues 8–28 (FLLFLIPIIPLSLLAILALIV) form a helical membrane-spanning segment. Topologically, residues 29–264 (RPRPIKIPIK…KAMDGIKAGN (236 aa)) are cytoplasmic. NADPH-binding residues include G46, S48, S49, G50, R71, K75, and D97. A GXSXG motif is present at residues 46-50 (GGSSG). The Proton donor role is filled by S174. Y188 acts as the Proton acceptor in catalysis. NADP(+)-binding residues include Y188 and K192. K192 acts as the Lowers pKa of active site Tyr in catalysis. A helical membrane pass occupies residues 265–285 (FTVSCNFEGFLLSLATTGMSP). At 286 to 288 (QRS) the chain is on the lumenal side. Residues 289 to 309 (FWLAFLEVITAGPIRLIALFF) traverse the membrane as a helical segment. Over 310 to 326 (QWDWYKAIEKWSKTKTK) the chain is Cytoplasmic.

The protein belongs to the short-chain dehydrogenases/reductases (SDR) family. In terms of tissue distribution, expressed in roots, leaves, stems, flowers and siliques.

Its subcellular location is the endoplasmic reticulum membrane. It catalyses the reaction sphinganine + NADP(+) = 3-oxosphinganine + NADPH + H(+). Its pathway is lipid metabolism; sphingolipid metabolism. In terms of biological role, catalyzes the reduction of 3'-oxosphinganine (3-ketodihydrosphingosine/KDS) to sphinganine (dihydrosphingosine/DHS), the second step of de novo sphingolipid biosynthesis. In plants, sphingolipids seems to play a critical role in mineral ion homeostasis, most likely through their involvement in the ion transport functionalities of membrane systems in the root. Lacks stereospecificity and can also produce L-threo-DHS in addition to D-erythro-DHS. The protein is 3-dehydrosphinganine reductase TSC10A (TSC10A) of Arabidopsis thaliana (Mouse-ear cress).